The sequence spans 285 residues: Urease accessory protein UreD 1 (285 aa).

It belongs to the UreD family. As to quaternary structure, ureD, UreF and UreG form a complex that acts as a GTP-hydrolysis-dependent molecular chaperone, activating the urease apoprotein by helping to assemble the nickel containing metallocenter of UreC. The UreE protein probably delivers the nickel.

The protein localises to the cytoplasm. In terms of biological role, required for maturation of urease via the functional incorporation of the urease nickel metallocenter. The sequence is that of Urease accessory protein UreD 1 from Pseudomonas syringae pv. tomato (strain ATCC BAA-871 / DC3000).